The sequence spans 86 residues: MAEDIQAKIKNYQTAPFDSRFPNQNQTRNCWQNYLDFHRCEKAMTAKGGDVSVCEWYRRVYKSLCPISWVSTWDDRRAEGTFPGKI.

Alanine 2 carries the post-translational modification N-acetylalanine. The 47-residue stretch at 27 to 73 folds into the CHCH domain; it reads TRNCWQNYLDFHRCEKAMTAKGGDVSVCEWYRRVYKSLCPISWVSTW. Positions 30-40 match the Cx9C motif motif; that stretch reads CWQNYLDFHRC. 2 disulfide bridges follow: cysteine 30/cysteine 65 and cysteine 40/cysteine 54. Positions 54 to 65 match the Cx10C motif motif; it reads CEWYRRVYKSLC. Position 62 is an N6-acetyllysine (lysine 62).

Belongs to the cytochrome c oxidase subunit 6B family. In terms of assembly, component of the cytochrome c oxidase (complex IV, CIV), a multisubunit enzyme composed of 14 subunits. The complex is composed of a catalytic core of 3 subunits MT-CO1, MT-CO2 and MT-CO3, encoded in the mitochondrial DNA, and 11 supernumerary subunits COX4I1 (or COX4I2), COX5A, COX5B, COX6A2 (or COX6A1), COX6B1 (or COX6B2), COX6C, COX7A1 (or COX7A2), COX7B, COX7C, COX8B and NDUFA4, which are encoded in the nuclear genome. The complex exists as a monomer or a dimer and forms supercomplexes (SCs) in the inner mitochondrial membrane with NADH-ubiquinone oxidoreductase (complex I, CI) and ubiquinol-cytochrome c oxidoreductase (cytochrome b-c1 complex, complex III, CIII), resulting in different assemblies (supercomplex SCI(1)III(2)IV(1) and megacomplex MCI(2)III(2)IV(2)).

It localises to the mitochondrion inner membrane. It participates in energy metabolism; oxidative phosphorylation. Component of the cytochrome c oxidase, the last enzyme in the mitochondrial electron transport chain which drives oxidative phosphorylation. The respiratory chain contains 3 multisubunit complexes succinate dehydrogenase (complex II, CII), ubiquinol-cytochrome c oxidoreductase (cytochrome b-c1 complex, complex III, CIII) and cytochrome c oxidase (complex IV, CIV), that cooperate to transfer electrons derived from NADH and succinate to molecular oxygen, creating an electrochemical gradient over the inner membrane that drives transmembrane transport and the ATP synthase. Cytochrome c oxidase is the component of the respiratory chain that catalyzes the reduction of oxygen to water. Electrons originating from reduced cytochrome c in the intermembrane space (IMS) are transferred via the dinuclear copper A center (CU(A)) of subunit 2 and heme A of subunit 1 to the active site in subunit 1, a binuclear center (BNC) formed by heme A3 and copper B (CU(B)). The BNC reduces molecular oxygen to 2 water molecules using 4 electrons from cytochrome c in the IMS and 4 protons from the mitochondrial matrix. The protein is Cytochrome c oxidase subunit 6B1 (COX6B1) of Bos taurus (Bovine).